A 310-amino-acid polypeptide reads, in one-letter code: Glutaminase 1 (310 aa).

Substrate is bound by residues Ser66, Asn117, Glu161, Asn168, Tyr192, Tyr244, and Val262. Position 294 is an N6-acetyllysine (Lys294).

It belongs to the glutaminase family. In terms of assembly, homotetramer.

The enzyme catalyses L-glutamine + H2O = L-glutamate + NH4(+). The protein is Glutaminase 1 of Escherichia coli O157:H7.